Reading from the N-terminus, the 460-residue chain is tRNA modification GTPase MnmE (460 aa).

Arg-24, Glu-81, and Lys-121 together coordinate (6S)-5-formyl-5,6,7,8-tetrahydrofolate. A TrmE-type G domain is found at 218–385; it reads GMVVAIAGPP…LIAAIEDFAA (168 aa). Residues 228 to 233, 247 to 253, and 272 to 275 contribute to the GTP site; these read NVGKST, SPHAGTT, and DTAG. 2 residues coordinate Mg(2+): Ser-232 and Thr-253. Lys-460 provides a ligand contact to (6S)-5-formyl-5,6,7,8-tetrahydrofolate.

The protein belongs to the TRAFAC class TrmE-Era-EngA-EngB-Septin-like GTPase superfamily. TrmE GTPase family. In terms of assembly, homodimer. Heterotetramer of two MnmE and two MnmG subunits. Requires K(+) as cofactor.

It is found in the cytoplasm. Its function is as follows. Exhibits a very high intrinsic GTPase hydrolysis rate. Involved in the addition of a carboxymethylaminomethyl (cmnm) group at the wobble position (U34) of certain tRNAs, forming tRNA-cmnm(5)s(2)U34. The chain is tRNA modification GTPase MnmE from Rhodopseudomonas palustris (strain BisB5).